The primary structure comprises 321 residues: Mas-related G-protein coupled receptor member D (321 aa).

Residues 1–8 (MNSTLDSS) are Extracellular-facing. Residue asparagine 2 is glycosylated (N-linked (GlcNAc...) asparagine). The chain crosses the membrane as a helical span at residues 9–29 (PAPGLTISPTMDLVTWIYFSV). Threonine 30 is a topological domain (cytoplasmic). A helical transmembrane segment spans residues 31–51 (FLAMATCVGGMAGNSLVIWLL). At 52–72 (SCNGMQRSPFCVYVLNLAVAD) the chain is on the extracellular side. Residues 73–93 (FLFLFCMASMLSLETGPLLIV) form a helical membrane-spanning segment. At 94–146 (NISAKIYEGMRRIKYFAYTAGLSLLTAISTQRCLSVLFPIWYKCHRPRHLSSV) the chain is on the cytoplasmic side. A helical membrane pass occupies residues 147–167 (VSGALWALAFLMNFLASFFCV). Topologically, residues 168–181 (QFWHPNKHQCFKVD) are extracellular. Residues 182 to 202 (IVFNSLILGIFMPVMILTSTI) form a helical membrane-spanning segment. The Cytoplasmic segment spans residues 203–220 (LFIRVRKNSLMQRRRPRR). Residues 221-241 (LYVVILTSILVFLTCSLPLGI) form a helical membrane-spanning segment. Topologically, residues 242–260 (NWFLLYWVDVKRDVRLLYS) are extracellular. The chain crosses the membrane as a helical span at residues 261–281 (CVSRFSSSLSSSANPVIYFLV). At 282–321 (GSQKSHRLQESLGAVLGRALRDEPEPEGRETPSTCTNDGV) the chain is on the cytoplasmic side. A compositionally biased stretch (basic and acidic residues) spans 302–311 (RDEPEPEGRE). The disordered stretch occupies residues 302-321 (RDEPEPEGRETPSTCTNDGV). Residues 312–321 (TPSTCTNDGV) are compositionally biased toward polar residues.

The protein belongs to the G-protein coupled receptor 1 family. Mas subfamily. In terms of tissue distribution, expressed in a subset of sensory neurons that includes nociceptors. Expressed in the subclass of non-peptidergic sensory neurons that are IB4(+) and VR1(-).

It is found in the cell membrane. May regulate nociceptor function and/or development, including the sensation or modulation of pain. Functions as a specific membrane receptor for beta-alanine. The receptor couples with G-protein G(q) and G(i). The protein is Mas-related G-protein coupled receptor member D (Mrgprd) of Mus musculus (Mouse).